The following is a 60-amino-acid chain: Large ribosomal subunit protein bL32B (60 aa).

The segment covering 1–19 (MAVPKRKMSRANTRHRRSQ) has biased composition (basic residues). Residues 1 to 20 (MAVPKRKMSRANTRHRRSQW) form a disordered region.

This sequence belongs to the bacterial ribosomal protein bL32 family.

This Saccharopolyspora erythraea (strain ATCC 11635 / DSM 40517 / JCM 4748 / NBRC 13426 / NCIMB 8594 / NRRL 2338) protein is Large ribosomal subunit protein bL32B.